A 591-amino-acid polypeptide reads, in one-letter code: Protein phosphatase EYA1 (591 aa).

Disordered stretches follow at residues 1–95, 150–169, and 239–319; these read MEMQ…SYPH, GLSQ…GTSF, and MTSS…PDSD. Over residues 8–23 the composition is skewed to low complexity; it reads SPHSRLSGSSESPSGP. Over residues 28-53 the composition is skewed to polar residues; sequence SHINSTSMTPNGTEVKTEPMSSSEIA. A compositionally biased stretch (low complexity) spans 56 to 75; sequence AADGSLDSFSGSALGSSSFS. The segment covering 78–87 has biased composition (pro residues); it reads PAHPFSPPQI. Over residues 240-252 the composition is skewed to low complexity; sequence TSSNTSPTTPSTN. Positions 253 to 286 are enriched in polar residues; it reads ATYQLQEPPSGVTSQAVTDPTAEYSTIHSPSTPI. Basic and acidic residues predominate over residues 287 to 302; the sequence is KETDSERLRRGSDGKS. Residue Asp-327 is the Nucleophile of the active site. Residues Asp-327, Asp-329, and Asp-555 each coordinate Mg(2+). The active-site Proton donor is the Asp-329.

This sequence belongs to the HAD-like hydrolase superfamily. EYA family. As to quaternary structure, probably interacts with SIX2, SIX4 and SIX5. Interacts with H2AX in response to DNA damage. Interacts with SIX3; promotes EYA1 translocation to the nucleus. Mg(2+) serves as cofactor. In terms of processing, sumoylated with SUMO1. As to expression, extensively expressed in cranial placodes, branchial arches, CNS and developing eye and nose.

The protein localises to the cytoplasm. It is found in the nucleus. The catalysed reaction is O-phospho-L-tyrosyl-[protein] + H2O = L-tyrosyl-[protein] + phosphate. It catalyses the reaction O-phospho-L-seryl-[protein] + H2O = L-seryl-[protein] + phosphate. The enzyme catalyses O-phospho-L-threonyl-[protein] + H2O = L-threonyl-[protein] + phosphate. Functions both as protein phosphatase and as transcriptional coactivator for SIX1, and probably also for SIX2, SIX4 and SIX5. Tyrosine phosphatase that dephosphorylates 'Tyr-142' of histone H2AX (H2AXY142ph) and promotes efficient DNA repair via the recruitment of DNA repair complexes containing MDC1. 'Tyr-142' phosphorylation of histone H2AX plays a central role in DNA repair and acts as a mark that distinguishes between apoptotic and repair responses to genotoxic stress. Its function as histone phosphatase may contribute to its function in transcription regulation during organogenesis. Also has phosphatase activity with proteins phosphorylated on Ser and Thr residues (in vitro). Required for normal embryonic development of the craniofacial and trunk skeleton, kidneys and ears. Together with SIX1, it plays an important role in hypaxial muscle development; in this it is functionally redundant with EYA2. The sequence is that of Protein phosphatase EYA1 (Eya1) from Mus musculus (Mouse).